The following is a 98-amino-acid chain: Co-chaperonin GroES (98 aa).

The protein belongs to the GroES chaperonin family. As to quaternary structure, heptamer of 7 subunits arranged in a ring. Interacts with the chaperonin GroEL.

It localises to the cytoplasm. Functionally, together with the chaperonin GroEL, plays an essential role in assisting protein folding. The GroEL-GroES system forms a nano-cage that allows encapsulation of the non-native substrate proteins and provides a physical environment optimized to promote and accelerate protein folding. GroES binds to the apical surface of the GroEL ring, thereby capping the opening of the GroEL channel. This chain is Co-chaperonin GroES, found in Renibacterium salmoninarum (strain ATCC 33209 / DSM 20767 / JCM 11484 / NBRC 15589 / NCIMB 2235).